The chain runs to 500 residues: Phenylalanine--tRNA ligase alpha subunit (500 aa).

Residues Thr-343, 382-384 (QVD), and Phe-423 contribute to the L-phenylalanine site. Glu-425 is a Mg(2+) binding site. Phe-448 lines the L-phenylalanine pocket.

It belongs to the class-II aminoacyl-tRNA synthetase family. Phe-tRNA synthetase alpha subunit type 2 subfamily. Tetramer of two alpha and two beta subunits. Mg(2+) serves as cofactor.

It is found in the cytoplasm. The catalysed reaction is tRNA(Phe) + L-phenylalanine + ATP = L-phenylalanyl-tRNA(Phe) + AMP + diphosphate + H(+). The protein is Phenylalanine--tRNA ligase alpha subunit of Thermococcus onnurineus (strain NA1).